The sequence spans 272 residues: Activator of basal transcription 1 (272 aa).

At methionine 1 the chain carries N-acetylmethionine. Over residues methionine 1–lysine 17 the composition is skewed to basic and acidic residues. Residues methionine 1–glycine 38 form a disordered region. Positions leucine 23–aspartate 34 are enriched in acidic residues. Positions glycine 46–leucine 142 constitute an RRM domain. A coiled-coil region spans residues alanine 161–arginine 191. Residues alanine 197–serine 272 are disordered.

Belongs to the ESF2/ABP1 family. Interacts with ESF1/ABTAP. Interacts with IGHMBP2.

The protein localises to the nucleus. Its subcellular location is the nucleolus. Functionally, could be a novel TATA-binding protein (TBP) which can function as a basal transcription activator. Can act as a regulator of basal transcription for class II genes. This Pongo abelii (Sumatran orangutan) protein is Activator of basal transcription 1 (ABT1).